The chain runs to 217 residues: Sentrin-specific protease 8 (217 aa).

Met1 carries the post-translational modification N-acetylmethionine. Positions 11-174 (SLLRQSDVSL…MYVICNTEAL (164 aa)) are protease. Active-site residues include His102 and Asp119. The active-site Nucleophile is Cys163.

The protein belongs to the peptidase C48 family.

In terms of biological role, protease that catalyzes two essential functions in the NEDD8 pathway: processing of full-length NEDD8 to its mature form and deconjugation of NEDD8 from targeted proteins such as cullins or p53. This is Sentrin-specific protease 8 (Senp8) from Rattus norvegicus (Rat).